The chain runs to 170 residues: Alpha-crystallin A chain (170 aa).

Position 1 is an N-acetylmethionine (methionine 1). Residues methionine 1–glutamate 63 form a required for complex formation with BFSP1 and BFSP2 region. Glutamine 6 is modified (deamidated glutamine; partial). Serine 45 bears the Phosphoserine mark. At glutamine 50 the chain carries Deamidated glutamine; partial. The sHSP domain occupies leucine 52 to glutamate 161. Residues lysine 70 and lysine 99 each carry the N6-acetyllysine modification. Histidine 100 provides a ligand contact to Zn(2+). Position 101 is a deamidated asparagine; partial (asparagine 101). Residues glutamate 102, histidine 107, and histidine 151 each coordinate Zn(2+). Positions proline 144–serine 170 are disordered. A compositionally biased stretch (basic and acidic residues) spans aspartate 148 to proline 164. O-linked (GlcNAc) serine glycosylation occurs at serine 159.

The protein belongs to the small heat shock protein (HSP20) family. Heteromer composed of three CRYAA and one CRYAB subunits. Inter-subunit bridging via zinc ions enhances stability, which is crucial as there is no protein turn over in the lens. Can also form homodimers and homotetramers (dimers of dimers) which serve as the building blocks of homooligomers. Within homooligomers, the zinc-binding motif is created from residues of 3 different molecules. His-100 and Glu-102 from one molecule are ligands of the zinc ion, and His-107 and His-151 residues from additional molecules complete the site with tetrahedral coordination geometry. Part of a complex required for lens intermediate filament formation composed of BFSP1, BFSP2 and CRYAA. In terms of processing, acetylation at Lys-70 may increase chaperone activity. Undergoes age-dependent proteolytical cleavage at the C-terminus.

It is found in the cytoplasm. The protein localises to the nucleus. In terms of biological role, contributes to the transparency and refractive index of the lens. Acts as a chaperone, preventing aggregation of various proteins under a wide range of stress conditions. Required for the correct formation of lens intermediate filaments as part of a complex composed of BFSP1, BFSP2 and CRYAA. This Choloepus hoffmanni (Hoffmann's two-fingered sloth) protein is Alpha-crystallin A chain (CRYAA).